The chain runs to 327 residues: Methionyl-tRNA formyltransferase (327 aa).

117–120 (SLLP) contacts (6S)-5,6,7,8-tetrahydrofolate.

Belongs to the Fmt family.

The catalysed reaction is L-methionyl-tRNA(fMet) + (6R)-10-formyltetrahydrofolate = N-formyl-L-methionyl-tRNA(fMet) + (6S)-5,6,7,8-tetrahydrofolate + H(+). Functionally, attaches a formyl group to the free amino group of methionyl-tRNA(fMet). The formyl group appears to play a dual role in the initiator identity of N-formylmethionyl-tRNA by promoting its recognition by IF2 and preventing the misappropriation of this tRNA by the elongation apparatus. The protein is Methionyl-tRNA formyltransferase of Delftia acidovorans (strain DSM 14801 / SPH-1).